The following is a 747-amino-acid chain: Ion-translocating oxidoreductase complex subunit C (747 aa).

4Fe-4S ferredoxin-type domains lie at methionine 368–tyrosine 397 and lysine 407–tyrosine 436. The [4Fe-4S] cluster site is built by cysteine 377, cysteine 380, cysteine 383, cysteine 387, cysteine 416, cysteine 419, cysteine 422, and cysteine 426. A disordered region spans residues valine 538 to aspartate 564.

This sequence belongs to the 4Fe4S bacterial-type ferredoxin family. RnfC subfamily. The complex is composed of six subunits: RnfA, RnfB, RnfC, RnfD, RnfE and RnfG. [4Fe-4S] cluster is required as a cofactor.

It is found in the cell inner membrane. In terms of biological role, part of a membrane-bound complex that couples electron transfer with translocation of ions across the membrane. This is Ion-translocating oxidoreductase complex subunit C from Pectobacterium carotovorum subsp. carotovorum (strain PC1).